A 147-amino-acid polypeptide reads, in one-letter code: 3-dehydroquinate dehydratase 1 (147 aa).

Residue Tyr-23 is the Proton acceptor of the active site. Residues Asn-75, His-81, and Asp-88 each coordinate substrate. The Proton donor role is filled by His-101. Substrate-binding positions include 102 to 103 and Arg-112; that span reads LS.

It belongs to the type-II 3-dehydroquinase family. As to quaternary structure, homododecamer.

The catalysed reaction is 3-dehydroquinate = 3-dehydroshikimate + H2O. The protein operates within metabolic intermediate biosynthesis; chorismate biosynthesis; chorismate from D-erythrose 4-phosphate and phosphoenolpyruvate: step 3/7. Functionally, catalyzes a trans-dehydration via an enolate intermediate. This Pseudomonas aeruginosa (strain ATCC 15692 / DSM 22644 / CIP 104116 / JCM 14847 / LMG 12228 / 1C / PRS 101 / PAO1) protein is 3-dehydroquinate dehydratase 1 (aroQ1).